Reading from the N-terminus, the 274-residue chain is MKREKKSFHLHMLSDATGETLISVGRAVASQYTMSQATEHIYPMIRNKTQLQRALDEIQQEPGIVLYTIIDKKIKILLRKRCEKIEIPCIDILHPVLNAFKSYLGIPTNLRVSAQHGLNADYFRRIEALDFTIEHDDGQSPNSLSDADVILVGISRTSKTPTSIYLANRGIKTANVPLIPGINLPDTLLGAKNALIIGLIASVERISHIRQNRNLGDDFSLESYTDRINISEELTYAKRICERFSWPVIDVTRRSIEETAAEIFELLSRFREGK.

153-160 (GISRTSKT) serves as a coordination point for ADP.

Belongs to the pyruvate, phosphate/water dikinase regulatory protein family. PDRP subfamily.

The enzyme catalyses N(tele)-phospho-L-histidyl/L-threonyl-[pyruvate, phosphate dikinase] + ADP = N(tele)-phospho-L-histidyl/O-phospho-L-threonyl-[pyruvate, phosphate dikinase] + AMP + H(+). It catalyses the reaction N(tele)-phospho-L-histidyl/O-phospho-L-threonyl-[pyruvate, phosphate dikinase] + phosphate + H(+) = N(tele)-phospho-L-histidyl/L-threonyl-[pyruvate, phosphate dikinase] + diphosphate. In terms of biological role, bifunctional serine/threonine kinase and phosphorylase involved in the regulation of the pyruvate, phosphate dikinase (PPDK) by catalyzing its phosphorylation/dephosphorylation. The sequence is that of Putative pyruvate, phosphate dikinase regulatory protein from Bartonella henselae (strain ATCC 49882 / DSM 28221 / CCUG 30454 / Houston 1) (Rochalimaea henselae).